An 895-amino-acid polypeptide reads, in one-letter code: DNA double-strand break repair Rad50 ATPase (895 aa).

ATP contacts are provided by residues 32-38 (NGAGKSS) and Q137. Positions 183 to 253 (SDYDYLKNEL…LNAQLETIKK (71 aa)) form a coiled coil. The 97-residue stretch at 411 to 507 (RAEINSSLMQ…ERKHQKKLLD (97 aa)) folds into the Zinc-hook domain. Zn(2+) contacts are provided by C455 and C458. 2 coiled-coil regions span residues 464-510 (TEKS…DRIN) and 618-647 (ENSL…AMDE).

This sequence belongs to the SMC family. RAD50 subfamily. In terms of assembly, homodimer. Forms a heterotetramer composed of two Mre11 subunits and two Rad50 subunits. Zn(2+) is required as a cofactor.

In terms of biological role, part of the Rad50/Mre11 complex, which is involved in the early steps of DNA double-strand break (DSB) repair. The complex may facilitate opening of the processed DNA ends to aid in the recruitment of HerA and NurA. Rad50 controls the balance between DNA end bridging and DNA resection via ATP-dependent structural rearrangements of the Rad50/Mre11 complex. The sequence is that of DNA double-strand break repair Rad50 ATPase from Thermoplasma volcanium (strain ATCC 51530 / DSM 4299 / JCM 9571 / NBRC 15438 / GSS1).